Here is a 121-residue protein sequence, read N- to C-terminus: Large ribosomal subunit protein uL14 (121 aa).

This sequence belongs to the universal ribosomal protein uL14 family. In terms of assembly, part of the 50S ribosomal subunit. Forms a cluster with proteins L3 and L19. In the 70S ribosome, L14 and L19 interact and together make contacts with the 16S rRNA in bridges B5 and B8.

Functionally, binds to 23S rRNA. Forms part of two intersubunit bridges in the 70S ribosome. The chain is Large ribosomal subunit protein uL14 from Mycoplasmopsis synoviae (strain 53) (Mycoplasma synoviae).